We begin with the raw amino-acid sequence, 202 residues long: Imidazoleglycerol-phosphate dehydratase (202 aa).

This sequence belongs to the imidazoleglycerol-phosphate dehydratase family.

Its subcellular location is the cytoplasm. It carries out the reaction D-erythro-1-(imidazol-4-yl)glycerol 3-phosphate = 3-(imidazol-4-yl)-2-oxopropyl phosphate + H2O. Its pathway is amino-acid biosynthesis; L-histidine biosynthesis; L-histidine from 5-phospho-alpha-D-ribose 1-diphosphate: step 6/9. In Salinibacter ruber (strain DSM 13855 / M31), this protein is Imidazoleglycerol-phosphate dehydratase.